The chain runs to 139 residues: Acidic phospholipase A2 5 (139 aa).

The first 16 residues, 1–16 (MRTLWIVAVWLMGVEG), serve as a signal peptide directing secretion. 7 cysteine pairs are disulfide-bonded: cysteine 42–cysteine 131, cysteine 44–cysteine 60, cysteine 59–cysteine 111, cysteine 65–cysteine 139, cysteine 66–cysteine 104, cysteine 73–cysteine 97, and cysteine 91–cysteine 102. Positions 43, 45, and 47 each coordinate Ca(2+). Residue histidine 63 is part of the active site. A Ca(2+)-binding site is contributed by aspartate 64. Aspartate 105 is an active-site residue.

This sequence belongs to the phospholipase A2 family. Group II subfamily. D49 sub-subfamily. It depends on Ca(2+) as a cofactor. As to expression, expressed by the venom gland.

It is found in the secreted. The enzyme catalyses a 1,2-diacyl-sn-glycero-3-phosphocholine + H2O = a 1-acyl-sn-glycero-3-phosphocholine + a fatty acid + H(+). Functionally, PLA2 catalyzes the calcium-dependent hydrolysis of the 2-acyl groups in 3-sn-phosphoglycerides. The sequence is that of Acidic phospholipase A2 5 from Echis pyramidum leakeyi (Leakey's carpet viper).